The sequence spans 341 residues: MPSIRLADLAQQLDAELHGDGDIVITGVASMQSAQTGHITFMVNPKYREHLGLCQASAVVMTQDDLPFAKSAALVVKNPYLTYARMAQILDTTPKPAQNIAPSAVIDETAKLGNNVSIGANAVIESGVELGDNVIIGAGCFVGKNSKIGAGSRLWANVTIYHEIQIGQNCLIQSGTVVGADGFGYANDRGNWVKIPQIGRVIIGDRVEIGACTTIDRGALDDTVIGNGVIIDNQCQIAHNVVIGDNTAVAGGVIMAGSLKIGRYCMIGGASVINGHMEICDKVTVTGMGMVMRPITEPGVYSSGIPLQPNKVWRKTAALVMNIDDMSKRLKSLERKVNQQD.

The Proton acceptor role is filled by His239.

This sequence belongs to the transferase hexapeptide repeat family. LpxD subfamily. Homotrimer.

The catalysed reaction is a UDP-3-O-[(3R)-3-hydroxyacyl]-alpha-D-glucosamine + a (3R)-hydroxyacyl-[ACP] = a UDP-2-N,3-O-bis[(3R)-3-hydroxyacyl]-alpha-D-glucosamine + holo-[ACP] + H(+). The enzyme catalyses UDP-3-O-[(3R)-3-hydroxytetradecanoyl]-alpha-D-glucosamine + (3R)-hydroxytetradecanoyl-[ACP] = UDP-2-N,3-O-bis[(3R)-3-hydroxytetradecanoyl]-alpha-D-glucosamine + holo-[ACP] + H(+). It functions in the pathway glycolipid biosynthesis; lipid IV(A) biosynthesis; lipid IV(A) from (3R)-3-hydroxytetradecanoyl-[acyl-carrier-protein] and UDP-N-acetyl-alpha-D-glucosamine: step 3/6. Functionally, catalyzes the N-acylation of UDP-3-O-(hydroxytetradecanoyl)glucosamine using 3-hydroxytetradecanoyl-ACP as the acyl donor. Is involved in the biosynthesis of lipid A, a phosphorylated glycolipid that anchors the lipopolysaccharide to the outer membrane of the cell. In Escherichia coli (strain UTI89 / UPEC), this protein is UDP-3-O-(3-hydroxymyristoyl)glucosamine N-acyltransferase.